Reading from the N-terminus, the 68-residue chain is Large ribosomal subunit protein bL32 (68 aa).

The protein belongs to the bacterial ribosomal protein bL32 family.

This is Large ribosomal subunit protein bL32 from Aster yellows witches'-broom phytoplasma (strain AYWB).